The primary structure comprises 128 residues: 3-aminoacrylate deaminase RutC (128 aa).

The protein belongs to the RutC family.

It catalyses the reaction (Z)-3-aminoacrylate + H2O + H(+) = 3-oxopropanoate + NH4(+). Its function is as follows. Involved in pyrimidine catabolism. Catalyzes the deamination of 3-aminoacrylate to malonic semialdehyde, a reaction that can also occur spontaneously. RutC may facilitate the reaction and modulate the metabolic fitness, rather than catalyzing essential functions. The protein is 3-aminoacrylate deaminase RutC of Pantoea ananatis (strain LMG 20103).